The following is a 132-amino-acid chain: Small heat shock protein hspL (132 aa).

The sHSP domain maps to 15 to 131; the sequence is TFTNFVSAPV…VKMSNNNKVE (117 aa).

Belongs to the small heat shock protein (HSP20) family.

In Dictyostelium discoideum (Social amoeba), this protein is Small heat shock protein hspL (hspL).